Consider the following 352-residue polypeptide: Phosphate acyltransferase (352 aa).

Basic and acidic residues predominate over residues 328-339 (ESFPGDAREREG). The disordered stretch occupies residues 328 to 352 (ESFPGDAREREGAPAPDAGTERVAS).

It belongs to the PlsX family. In terms of assembly, homodimer. Probably interacts with PlsY.

It is found in the cytoplasm. The catalysed reaction is a fatty acyl-[ACP] + phosphate = an acyl phosphate + holo-[ACP]. Its pathway is lipid metabolism; phospholipid metabolism. Functionally, catalyzes the reversible formation of acyl-phosphate (acyl-PO(4)) from acyl-[acyl-carrier-protein] (acyl-ACP). This enzyme utilizes acyl-ACP as fatty acyl donor, but not acyl-CoA. In Citrifermentans bemidjiense (strain ATCC BAA-1014 / DSM 16622 / JCM 12645 / Bem) (Geobacter bemidjiensis), this protein is Phosphate acyltransferase.